Consider the following 492-residue polypeptide: MKKTRDNPCDKIDCGKPKNTKGVSLVKKHIFEDIILQNALNFTEEVVEIFGDLLNKGMNITELVARIKELTDKLGRGAIEAIIEELDRIIKEDKRRKEKWVVERKDKKRLTTVLGDIEYERTYYKSKEDGRYTYLVDDALEIGRHDRIEKGVKIKLVENAIEESYERSSKKACPEELSKQTVLNAIREIGEVEVKREIKEKKEVRGLYIEADEDHVPLQDGRDETPRLVYIHEGREEKNGRNVLKNVYYKAYVGEKPEDIWIDVANYIEDNYKEEKIEKIYIAGDGAPWIKEGLKWILKSRFVLDRYHLNKYVLKATSKEPKYRDKIWRAINEGDKEGVKKVFDELIKAAEEEREKEKIKEAKKYILNNWEGIKIYSEDEDVIGCSAEGHISHVFSARLSRNPLGWSREGLKLMAKLRVFSKNGGDLREVEWGKKKNINAGSYKLTKKQIKEAVRRVKTSTNEKINNITVLNIGKVTPIYRVLRALKYAQVI.

Belongs to the UPF0236 family.

The polypeptide is UPF0236 protein TTE0402 (Caldanaerobacter subterraneus subsp. tengcongensis (strain DSM 15242 / JCM 11007 / NBRC 100824 / MB4) (Thermoanaerobacter tengcongensis)).